The primary structure comprises 608 residues: FAD-binding monooxygenase ktnD (608 aa).

Asn4 carries an N-linked (GlcNAc...) asparagine glycan. A helical transmembrane segment spans residues Ala17 to His37. FAD is bound by residues Thr56 to Asn59, Asp68 to Val69, and Tyr74. Residue Ala66–Asp68 participates in NADP(+) binding. An N-linked (GlcNAc...) asparagine glycan is attached at Asn114. Residues Asn201–Gln207 and Arg224–Ser225 contribute to the NADP(+) site. Asn325 carries N-linked (GlcNAc...) asparagine glycosylation. Residues Ala535–Trp555 form a helical membrane-spanning segment.

Belongs to the FAD-binding monooxygenase family. FAD is required as a cofactor.

Its subcellular location is the membrane. In terms of biological role, non-reducing polyketide synthase; part of the gene cluster that mediates the biosynthesis of the bicoumarin kotanin. The non-reducing polyketide synthase ktnS first catalyzes the formation of the pentaketidic 4,7-dihydroxy-5-methylcoumarin from acetyl coenzyme A and 4 malonyl coenzyme A molecules. Further O-methylation by ktnB leads to the formation of 7-demethylsiderin. Then, an oxidative phenol coupling catalyzed by the cytochrome P450 monooxygenase ktnC forms the 8,8'-dimer P-orlandin via dimerization the monomeric precursor, 7-demethylsiderin. P-orlandin is subsequently O-methylated in a stepwise fashion to demethylkotanin and kotanin. The function of ktnD within the pathway has not been determined yet. This chain is FAD-binding monooxygenase ktnD, found in Aspergillus niger (strain ATCC MYA-4892 / CBS 513.88 / FGSC A1513).